Here is a 657-residue protein sequence, read N- to C-terminus: Threonine--tRNA ligase (657 aa).

One can recognise a TGS domain in the interval 7–70; the sequence is DRQQVIITLP…TENARVSIIT (64 aa). Residues 253 to 555 form a catalytic region; that stretch reads DHRKLGAELG…LIEHTAGNFP (303 aa). Cys-351, His-402, and His-532 together coordinate Zn(2+).

It belongs to the class-II aminoacyl-tRNA synthetase family. In terms of assembly, homodimer. The cofactor is Zn(2+).

It is found in the cytoplasm. It carries out the reaction tRNA(Thr) + L-threonine + ATP = L-threonyl-tRNA(Thr) + AMP + diphosphate + H(+). Functionally, catalyzes the attachment of threonine to tRNA(Thr) in a two-step reaction: L-threonine is first activated by ATP to form Thr-AMP and then transferred to the acceptor end of tRNA(Thr). Also edits incorrectly charged L-seryl-tRNA(Thr). The polypeptide is Threonine--tRNA ligase (Chlorobaculum tepidum (strain ATCC 49652 / DSM 12025 / NBRC 103806 / TLS) (Chlorobium tepidum)).